The following is a 491-amino-acid chain: UDP-N-acetylmuramate--L-alanine ligase (491 aa).

An ATP-binding site is contributed by 126 to 132 (GTHGKTT).

This sequence belongs to the MurCDEF family.

It is found in the cytoplasm. It carries out the reaction UDP-N-acetyl-alpha-D-muramate + L-alanine + ATP = UDP-N-acetyl-alpha-D-muramoyl-L-alanine + ADP + phosphate + H(+). It participates in cell wall biogenesis; peptidoglycan biosynthesis. Its function is as follows. Cell wall formation. This is UDP-N-acetylmuramate--L-alanine ligase from Escherichia coli (strain K12 / MC4100 / BW2952).